A 316-amino-acid chain; its full sequence is DNA-directed RNA polymerase subunit alpha (316 aa).

Residues 1–233 (MCMSQFPIEF…HWFNPLQTLE (233 aa)) form an alpha N-terminal domain (alpha-NTD) region. Positions 245 to 316 (MAQLSNMLIE…LHCQLKKYVD (72 aa)) are alpha C-terminal domain (alpha-CTD).

Belongs to the RNA polymerase alpha chain family. In terms of assembly, in plastids the minimal PEP RNA polymerase catalytic core is composed of four subunits: alpha, beta, beta', and beta''. When a (nuclear-encoded) sigma factor is associated with the core the holoenzyme is formed, which can initiate transcription.

It localises to the plastid. The protein localises to the chloroplast. The catalysed reaction is RNA(n) + a ribonucleoside 5'-triphosphate = RNA(n+1) + diphosphate. DNA-dependent RNA polymerase catalyzes the transcription of DNA into RNA using the four ribonucleoside triphosphates as substrates. This chain is DNA-directed RNA polymerase subunit alpha, found in Cyanidioschyzon merolae (strain NIES-3377 / 10D) (Unicellular red alga).